Reading from the N-terminus, the 296-residue chain is ATP synthase gamma chain (296 aa).

The protein belongs to the ATPase gamma chain family. As to quaternary structure, F-type ATPases have 2 components, CF(1) - the catalytic core - and CF(0) - the membrane proton channel. CF(1) has five subunits: alpha(3), beta(3), gamma(1), delta(1), epsilon(1). CF(0) has three main subunits: a, b and c.

Its subcellular location is the cell inner membrane. Functionally, produces ATP from ADP in the presence of a proton gradient across the membrane. The gamma chain is believed to be important in regulating ATPase activity and the flow of protons through the CF(0) complex. This Jannaschia sp. (strain CCS1) protein is ATP synthase gamma chain.